The primary structure comprises 398 residues: Carbamoyl phosphate synthase large chain (398 aa).

Residues 1-187 enclose the ATP-grasp domain; the sequence is KLGVPQPEGG…LAKIAAKVIV (187 aa). Positions 1–255 are carbamoyl phosphate synthetic domain; it reads KLGVPQPEGG…YKAELAADNV (255 aa). ATP-binding residues include Arg32, Asp71, Leu73, Glu78, Gly103, Val104, His105, Ser106, Gln146, and Glu158. Gln146, Glu158, and Asn160 together coordinate Mg(2+). Residues Gln146, Glu158, and Asn160 each coordinate Mn(2+). Positions 254–395 constitute an MGS-like domain; the sequence is NVLPLTGKVF…NEYHKEMEEE (142 aa). The allosteric domain stretch occupies residues 256 to 398; that stretch reads LPLTGKVFLS…HKEMEEENKV (143 aa).

This sequence belongs to the CarB family. In terms of assembly, composed of two chains; the small (or glutamine) chain promotes the hydrolysis of glutamine to ammonia, which is used by the large (or ammonia) chain to synthesize carbamoyl phosphate. Tetramer of heterodimers (alpha,beta)4. Mg(2+) serves as cofactor. The cofactor is Mn(2+).

The enzyme catalyses hydrogencarbonate + L-glutamine + 2 ATP + H2O = carbamoyl phosphate + L-glutamate + 2 ADP + phosphate + 2 H(+). It carries out the reaction hydrogencarbonate + NH4(+) + 2 ATP = carbamoyl phosphate + 2 ADP + phosphate + 2 H(+). It functions in the pathway amino-acid biosynthesis; L-arginine biosynthesis; carbamoyl phosphate from bicarbonate: step 1/1. Its pathway is pyrimidine metabolism; UMP biosynthesis via de novo pathway; (S)-dihydroorotate from bicarbonate: step 1/3. Large subunit of the glutamine-dependent carbamoyl phosphate synthetase (CPSase). CPSase catalyzes the formation of carbamoyl phosphate from the ammonia moiety of glutamine, carbonate, and phosphate donated by ATP, constituting the first step of 2 biosynthetic pathways, one leading to arginine and/or urea and the other to pyrimidine nucleotides. The large subunit (synthetase) binds the substrates ammonia (free or transferred from glutamine from the small subunit), hydrogencarbonate and ATP and carries out an ATP-coupled ligase reaction, activating hydrogencarbonate by forming carboxy phosphate which reacts with ammonia to form carbamoyl phosphate. This Methanosarcina barkeri protein is Carbamoyl phosphate synthase large chain.